Here is a 419-residue protein sequence, read N- to C-terminus: MRLTPSLISCLSLLHFTSALVAFPGAEGFGANAVGGRQGVVYVVSNLNDSGEGSLRDAVSQPGRIVVFSVGGVIEITDRIVVSKQVTILGQTAPGDGITVYGNGWSFSNADDAIVRYIRIRMGKGGSSGKDAMGIADGKNMIFDHVSVSWGRDETFSINGDVSNVTIQNSIIAQGLETHSCGGLMQTDGGVSLFRNLYIDNKTRNPKVKGVNEFTNNVIYNWGGGGGYIAGGSDGESNVNVIGNYFISGLDTSVTAFTRGNENFHAYVETNYYDSDKDGTLNGSELGVDSTNYGGMDLVTEKYDYPAVASVLSPDDALTYVTKYAGASKVRDSVDTQLVAQVESYGKDGALISDEADMGGAGDLDQGTTPTDTDGDGIPDDAEAELGTDPNTADSMDLDTSGYTFLEVWANSLVPSSYA.

Positions 1-19 (MRLTPSLISCLSLLHFTSA) are cleaved as a signal peptide. 3 N-linked (GlcNAc...) asparagine glycosylation sites follow: asparagine 48, asparagine 164, and asparagine 201. Arginine 204 is an active-site residue. Residues 261-296 (NENFHAYVETNYYDSDKDGTLNGSELGVDSTNYGGM) form the EF-hand domain. 4 residues coordinate Ca(2+): aspartate 274, aspartate 276, aspartate 278, and threonine 280. Residue asparagine 282 is glycosylated (N-linked (GlcNAc...) asparagine). A Ca(2+)-binding site is contributed by glutamate 285. The tract at residues 352–395 (ISDEADMGGAGDLDQGTTPTDTDGDGIPDDAEAELGTDPNTADS) is disordered. Positions 363 to 372 (DLDQGTTPTD) are enriched in low complexity. Acidic residues predominate over residues 373–386 (TDGDGIPDDAEAEL).

The protein belongs to the polysaccharide lyase 1 family. Ca(2+) serves as cofactor.

It localises to the secreted. It carries out the reaction Eliminative cleavage of (1-&gt;4)-alpha-D-galacturonan to give oligosaccharides with 4-deoxy-alpha-D-galact-4-enuronosyl groups at their non-reducing ends.. In terms of biological role, pectinolytic enzyme consist of four classes of enzymes: pectin lyase, polygalacturonase, pectin methylesterase and rhamnogalacturonase. Among pectinolytic enzymes, pectin lyase is the most important in depolymerization of pectin, since it cleaves internal glycosidic bonds of highly methylated pectins. Favors pectate, the anion, over pectin, the methyl ester. The sequence is that of Probable pectate lyase C (plyC) from Aspergillus oryzae (strain ATCC 42149 / RIB 40) (Yellow koji mold).